Here is a 247-residue protein sequence, read N- to C-terminus: Segregation and condensation protein A (247 aa).

This sequence belongs to the ScpA family. As to quaternary structure, component of a cohesin-like complex composed of ScpA, ScpB and the Smc homodimer, in which ScpA and ScpB bind to the head domain of Smc. The presence of the three proteins is required for the association of the complex with DNA.

Its subcellular location is the cytoplasm. Participates in chromosomal partition during cell division. May act via the formation of a condensin-like complex containing Smc and ScpB that pull DNA away from mid-cell into both cell halves. This chain is Segregation and condensation protein A, found in Lactobacillus johnsonii (strain CNCM I-12250 / La1 / NCC 533).